The chain runs to 377 residues: Histone deacetylase 8 (377 aa).

The interval Arg5–Lys336 is histone deacetylase. The Proton donor/acceptor role is filled by His145. Asp182, His184, and Asp274 together coordinate Zn(2+).

It belongs to the histone deacetylase family. Requires Zn(2+) as cofactor. Expressed in stems, leaves, flowers, siliques and mature seeds.

The protein localises to the nucleus. The protein resides in the cytoplasm. It catalyses the reaction N(6)-acetyl-L-lysyl-[histone] + H2O = L-lysyl-[histone] + acetate. Functionally, responsible for the deacetylation of lysine residues on the N-terminal part of the core histones (H2A, H2B, H3 and H4). Histone deacetylation gives a tag for epigenetic repression and plays an important role in transcriptional regulation, cell cycle progression and developmental events. Histone deacetylases act via the formation of large multiprotein complexes. In Arabidopsis thaliana (Mouse-ear cress), this protein is Histone deacetylase 8.